We begin with the raw amino-acid sequence, 168 residues long: Cyanate hydratase (168 aa).

Residues arginine 91, glutamate 94, and serine 117 contribute to the active site.

Belongs to the cyanase family.

It carries out the reaction cyanate + hydrogencarbonate + 3 H(+) = NH4(+) + 2 CO2. In terms of biological role, catalyzes the reaction of cyanate with bicarbonate to produce ammonia and carbon dioxide. The polypeptide is Cyanate hydratase (Arabidopsis thaliana (Mouse-ear cress)).